The chain runs to 509 residues: Photosystem II CP47 reaction center protein (509 aa).

6 helical membrane-spanning segments follow: residues 21–36 (AVHLMHTALVAGWAGS), 101–115 (IGLSGLLFLAAIWHW), 140–156 (GIHLFLSGLLCFGFGAF), 203–218 (IAAGIVGILAGLFHLS), 237–252 (VLSSSISAVFFAAFIV), and 457–472 (SFALIFFFGHLWHGGR).

The protein belongs to the PsbB/PsbC family. PsbB subfamily. In terms of assembly, PSII is composed of 1 copy each of membrane proteins PsbA, PsbB, PsbC, PsbD, PsbE, PsbF, PsbH, PsbI, PsbJ, PsbK, PsbL, PsbM, PsbT, PsbX, PsbY, PsbZ, Psb30/Ycf12, at least 3 peripheral proteins of the oxygen-evolving complex and a large number of cofactors. It forms dimeric complexes. Binds multiple chlorophylls. PSII binds additional chlorophylls, carotenoids and specific lipids. is required as a cofactor.

The protein resides in the plastid. It localises to the cyanelle thylakoid membrane. Its function is as follows. One of the components of the core complex of photosystem II (PSII). It binds chlorophyll and helps catalyze the primary light-induced photochemical processes of PSII. PSII is a light-driven water:plastoquinone oxidoreductase, using light energy to abstract electrons from H(2)O, generating O(2) and a proton gradient subsequently used for ATP formation. In Cyanophora paradoxa, this protein is Photosystem II CP47 reaction center protein.